The chain runs to 415 residues: Histidine--tRNA ligase (415 aa).

It belongs to the class-II aminoacyl-tRNA synthetase family. As to quaternary structure, homodimer.

The protein resides in the cytoplasm. The enzyme catalyses tRNA(His) + L-histidine + ATP = L-histidyl-tRNA(His) + AMP + diphosphate + H(+). This is Histidine--tRNA ligase from Phytoplasma australiense.